Reading from the N-terminus, the 375-residue chain is Cinnamyl alcohol dehydrogenase 3 (375 aa).

A Zn(2+)-binding site is contributed by Cys-44. Ser-46 is a binding site for NADP(+). Residues His-66, Glu-67, Cys-97, Cys-100, Cys-103, Cys-111, and Cys-160 each coordinate Zn(2+). NADP(+) is bound by residues Thr-164, Gly-186–Gly-191, Ser-209–Lys-214, Thr-249, Gly-273, and Ser-296–Ile-298.

The protein belongs to the zinc-containing alcohol dehydrogenase family. In terms of assembly, homodimer. Zn(2+) serves as cofactor. As to expression, expressed in the root tips. Expressed in the apical meristematic regions, leaf veins and at the base of the trichomes. Expressed at the base of the stems. Expressed in the abscission zones of newly formed siliques.

The enzyme catalyses (E)-cinnamyl alcohol + NADP(+) = (E)-cinnamaldehyde + NADPH + H(+). It carries out the reaction (E)-coniferol + NADP(+) = (E)-coniferaldehyde + NADPH + H(+). The catalysed reaction is (E)-sinapyl alcohol + NADP(+) = (E)-sinapaldehyde + NADPH + H(+). It catalyses the reaction (E)-4-coumaroyl alcohol + NADP(+) = (E)-4-coumaraldehyde + NADPH + H(+). The enzyme catalyses (E)-caffeyl alcohol + NADP(+) = (E)-caffeyl aldehyde + NADPH + H(+). It functions in the pathway aromatic compound metabolism; phenylpropanoid biosynthesis. Its function is as follows. Involved in lignin biosynthesis. Catalyzes the final step specific for the production of lignin monomers. Catalyzes the NADPH-dependent reduction of coniferaldehyde, 5-hydroxyconiferaldehyde, sinapaldehyde, 4-coumaraldehyde and caffeyl aldehyde to their respective alcohols. The sequence is that of Cinnamyl alcohol dehydrogenase 3 from Arabidopsis thaliana (Mouse-ear cress).